The primary structure comprises 439 residues: Glutamine synthetase (439 aa).

Residues 12–93 (SKIKFVQLVF…VYGFIYKDNK (82 aa)) form the GS beta-grasp domain. The region spanning 99-439 (PRGILKRALE…EWELERYFFL (341 aa)) is the GS catalytic domain. Mg(2+)-binding residues include glutamate 122 and glutamate 124. Glutamate 172 lines the ATP pocket. 2 residues coordinate Mg(2+): glutamate 177 and glutamate 184. Glycine 229 lines the L-glutamate pocket. Histidine 233 contacts Mg(2+). ATP is bound by residues 235-237 (HIS) and serine 237. L-glutamate contacts are provided by arginine 283, glutamate 289, and arginine 301. Arginine 301, arginine 306, and lysine 313 together coordinate ATP. Glutamate 318 lines the Mg(2+) pocket. Arginine 320 is an L-glutamate binding site.

It belongs to the glutamine synthetase family. In terms of assembly, oligomer of 12 subunits arranged in the form of two hexagons. Mg(2+) is required as a cofactor.

Its subcellular location is the cytoplasm. It catalyses the reaction L-glutamate + NH4(+) + ATP = L-glutamine + ADP + phosphate + H(+). Probably involved in nitrogen metabolism via ammonium assimilation. Catalyzes the ATP-dependent biosynthesis of glutamine from glutamate and ammonia. The sequence is that of Glutamine synthetase from Pyrococcus woesei.